The chain runs to 123 residues: Small ribosomal subunit protein uS12 (123 aa).

Position 90 is a 3-methylthioaspartic acid (aspartate 90).

It belongs to the universal ribosomal protein uS12 family. As to quaternary structure, part of the 30S ribosomal subunit. Contacts proteins S8 and S17. May interact with IF1 in the 30S initiation complex.

With S4 and S5 plays an important role in translational accuracy. Its function is as follows. Interacts with and stabilizes bases of the 16S rRNA that are involved in tRNA selection in the A site and with the mRNA backbone. Located at the interface of the 30S and 50S subunits, it traverses the body of the 30S subunit contacting proteins on the other side and probably holding the rRNA structure together. The combined cluster of proteins S8, S12 and S17 appears to hold together the shoulder and platform of the 30S subunit. This chain is Small ribosomal subunit protein uS12, found in Ehrlichia ruminantium (strain Gardel).